The primary structure comprises 265 residues: Small ribosomal subunit protein eS4 (265 aa).

Positions 42–104 (LPLILIIRNR…TGENYRLLYD (63 aa)) constitute an S4 RNA-binding domain.

It belongs to the eukaryotic ribosomal protein eS4 family.

It localises to the cytoplasm. The chain is Small ribosomal subunit protein eS4 (RPS4) from Oryza sativa subsp. japonica (Rice).